The following is a 741-amino-acid chain: MKQALTPEQIKEQKPYLDWSLSEREYDYISEKLLGRLPNFTETGLFSAMWSEHCSYKKSKPVLRLFPNQNDRVLQGPGEGAGVVDIDDGQAVVFKAESHNHPSTVEPYQGAATGVGGILRDIFSMGARPIASLDSLHFGELDDPKMQMKVAGTVKGIGDYGNCMGIPTVAGETTFDPCYSGNLLVNAMSVGLMDQKDIQKGKAAGIGNAVMYVGAKTGRDGIHGATFASADFSDENATQRSAVQVGDPFMEKLLLEACLELIQNHPDWLVGIQDMGAAGIVSSSAEMASEGDAGMDLDLDLVPQREPNMSAYEIMLSESQERMLLCVNKGHEDDVKKIFDFYGLEAVTIGRITEGRQYVLHHDGQVVCDIPVSSLTDDVLEETSEEQKPARILQAEQEANWQPEVTDAGATLEQLLQQSTIADKSIFFEQYDSMVRTSTVVGPGSDAGVLRVRGTKKGLAMTTDGNGRFVYLNPEVGGKMALAEAAANIVATGALPLAITDCLNYGDPNDPEIFWELHQSVSGMAEACRVFDTPVISGNVSLYNENNGQAIHPTPMVGMVGLIKDLKNLVKMAAQAAGDQVYLLGQTGDDYAGSELQKMLTGDIAGTVADFDLNHVHAMMKTLLSLMEDGKVASAHDLAEGGLGVALAETLFKTDLGMNLKLDLTKNQLFSETAGRFVVTVKKEDAAAFEAALGDDATLIGEVTNSHWLQVRLADGNLNKNVADLEQLWKEAIPCQLKSRD.

Residue His53 is part of the active site. Residues Tyr56 and Lys95 each coordinate ATP. Residue Glu97 coordinates Mg(2+). Substrate is bound by residues 98–101 (SHNH) and Arg120. His99 functions as the Proton acceptor in the catalytic mechanism. Asp121 is a Mg(2+) binding site. Gln244 lines the substrate pocket. Asp274 is a binding site for Mg(2+). 318–320 (ESQ) provides a ligand contact to substrate. Residues Asp501 and Gly538 each contribute to the ATP site. Asn539 serves as a coordination point for Mg(2+). Ser541 contributes to the substrate binding site.

Belongs to the FGAMS family. As to quaternary structure, monomer. Part of the FGAM synthase complex composed of 1 PurL, 1 PurQ and 2 PurS subunits.

It localises to the cytoplasm. It catalyses the reaction N(2)-formyl-N(1)-(5-phospho-beta-D-ribosyl)glycinamide + L-glutamine + ATP + H2O = 2-formamido-N(1)-(5-O-phospho-beta-D-ribosyl)acetamidine + L-glutamate + ADP + phosphate + H(+). The protein operates within purine metabolism; IMP biosynthesis via de novo pathway; 5-amino-1-(5-phospho-D-ribosyl)imidazole from N(2)-formyl-N(1)-(5-phospho-D-ribosyl)glycinamide: step 1/2. Functionally, part of the phosphoribosylformylglycinamidine synthase complex involved in the purines biosynthetic pathway. Catalyzes the ATP-dependent conversion of formylglycinamide ribonucleotide (FGAR) and glutamine to yield formylglycinamidine ribonucleotide (FGAM) and glutamate. The FGAM synthase complex is composed of three subunits. PurQ produces an ammonia molecule by converting glutamine to glutamate. PurL transfers the ammonia molecule to FGAR to form FGAM in an ATP-dependent manner. PurS interacts with PurQ and PurL and is thought to assist in the transfer of the ammonia molecule from PurQ to PurL. In Limosilactobacillus fermentum (strain NBRC 3956 / LMG 18251) (Lactobacillus fermentum), this protein is Phosphoribosylformylglycinamidine synthase subunit PurL.